The chain runs to 186 residues: Elongation factor P (186 aa).

Arg-32 is a glycosylation site (N-alpha-linked (Rha) arginine).

Belongs to the elongation factor P family. Post-translationally, glycosylated ar Arg-32 by EarP: arginine rhamnosylation is required for EF-P function and rescue of polyproline stalled ribosomes.

Its subcellular location is the cytoplasm. Its pathway is protein biosynthesis; polypeptide chain elongation. Its function is as follows. Involved in peptide bond synthesis. Stimulates efficient translation and peptide-bond synthesis on native or reconstituted 70S ribosomes in vitro. Probably functions indirectly by altering the affinity of the ribosome for aminoacyl-tRNA, thus increasing their reactivity as acceptors for peptidyl transferase. This is Elongation factor P from Shewanella oneidensis (strain ATCC 700550 / JCM 31522 / CIP 106686 / LMG 19005 / NCIMB 14063 / MR-1).